Here is a 301-residue protein sequence, read N- to C-terminus: MKSNPAIQAAIDLTAGAAGGTACVLTGQPFDTMKVKMQTFPDLYRGLTDCCLRTYSQVGFRGFYKGTSPALIANIAENSVLFMCYGFCQQVVRKVVGLDRQAKLSDLQNAAAGSFASAFAALVLCPTELVKCRLQTMYEMETSGKIAASQNTVWSVVKEIFRKDGPLGFYHGLSSTLLREVPGYFFFFGGYELSRSFFASGRSKDELGPIPLMLSGGFGGICLWLAVYPVDCIKSRIQVLSMTGKQTGLIRTFLSIVKNEGITALYSGLKPTMIRAFPANGALFLAYEYSRKLMMSQLEAC.

The next 6 helical transmembrane spans lie at 5 to 25, 68 to 88, 110 to 130, 168 to 188, 207 to 227, and 237 to 257; these read PAIQ…ACVL, SPAL…YGFC, AAAG…TELV, GFYH…FFFF, LGPI…WLAV, and IQVL…LSIV. 3 Solcar repeats span residues 7–91, 104–197, and 207–293; these read IQAA…CQQV, LSDL…SRSF, and LGPI…SRKL.

It belongs to the mitochondrial carrier (TC 2.A.29) family. Expressed in the liver (at protein level).

The protein localises to the mitochondrion inner membrane. The protein resides in the mitochondrion membrane. It catalyses the reaction L-citrulline(in) + L-ornithine(out) + H(+)(in) = L-citrulline(out) + L-ornithine(in) + H(+)(out). The enzyme catalyses L-ornithine(in) + L-arginine(out) = L-ornithine(out) + L-arginine(in). The catalysed reaction is L-ornithine(out) + L-lysine(in) = L-ornithine(in) + L-lysine(out). It carries out the reaction L-ornithine(out) + H(+)(in) = L-ornithine(in) + H(+)(out). It catalyses the reaction L-lysine(out) + H(+)(in) = L-lysine(in) + H(+)(out). With respect to regulation, inhibited by pyridoxal 5'-phosphate as well as by mercurials (mersalyl, p-chloromercuribenzene sulfonate, and mercuric chloride), N-ethylmaleimide and spermine. Its function is as follows. Mitochondrial ornithine-citrulline antiporter. Catalyzes the exchange between cytosolic ornithine and mitochondrial citrulline plus an H(+), the proton compensates the positive charge of ornithine thus leading to an electroneutral transport. Plays a crucial role in the urea cycle, by connecting the cytosolic and the intramitochondrial reactions of the urea cycle. Lysine and arginine are also transported by the antiport mechanism. In addition, catalyzes an electroneutral exchange of ornithine or lysine for H(+), a reaction driven by the pH gradient across the inner membrane. This is Mitochondrial ornithine transporter 1 (Slc25a15) from Rattus norvegicus (Rat).